The following is a 353-amino-acid chain: Replication factor C subunit 2 (353 aa).

Residue methionine 1 is modified to N-acetylmethionine. ATP-binding positions include valine 28, arginine 32, 65–73, asparagine 171, and arginine 229; that span reads GPPGTGKTS.

It belongs to the activator 1 small subunits family. Replication factor C (RFC) is a heteropentamer of subunits RFC1, RFC2, RFC3, RFC4 and RFC5 and forms a complex with POL30/PCNA in the presence of ATP. Component of the RAD24-RFC complex which consists of RAD14, RFC2, RFC3, RFC4 and RFC5 and associates with the checkpoint clamp DDC1:MEC3:RAD17 complex. Component of the ELG1-RFC complex which consists of ELG1, RFC2, RFC3, RFC4 and RFC5. Component of the CTF18-RFC complex, which consists of CTF18, CTF8, DCC1, RFC2, RFC3, RFC4 and RFC5. RFC2 interacts with ECO1.

It localises to the nucleus. In terms of biological role, component of ATP-dependent clamp loader (RFC and RFC-like) complexes for DNA clamps, such as the POL30/PCNA homotrimer and the checkpoint clamp DDC1:MEC3:RAD17 complex. During a clamp loading circle, the RFC:clamp complex binds to DNA and the recognition of the double-stranded/single-stranded junction stimulates ATP hydrolysis by RFC. The complex presumably provides bipartite ATP sites in which one subunit supplies a catalytic site for hydrolysis of ATP bound to the neighboring subunit. Dissociation of RFC from the clamp leaves the clamp encircling DNA. Component of the replication factor C (RFC or activator 1) complex which loads POL30/PCNA and acts during elongation of primed DNA templates by DNA polymerase delta and epsilon. RFC has an essential but redundant activity in sister chromatid cohesion establishment. Component of the RFC-like complex CTF18-RFC which is required for efficient establishment of chromosome cohesion during S-phase and may load or unload POL30/PCNA. Component of the RFC-like RAD24-RFC complex which loads the checkpoint clamp DDC1:MEC3:RAD17 complex and is involved in DNA repair pathways. Component of the RFC-like ELG1-RFC complex which appears to have a role in DNA replication, replication fork re-start, recombination and repair. RFC2 binds ATP and single-stranded DNA. In Saccharomyces cerevisiae (strain ATCC 204508 / S288c) (Baker's yeast), this protein is Replication factor C subunit 2 (RFC2).